A 395-amino-acid polypeptide reads, in one-letter code: Scyllo-inosose 3-dehydrogenase (395 aa).

Residue Cys66 participates in Zn(2+) binding. Residues Ser68 and His71 each act as charge relay system in the active site. His95, Glu96, Cys131, Cys134, Cys137, Cys145, and Glu193 together coordinate Zn(2+). NAD(+) is bound by residues Ile223, Glu243, and Arg248.

Belongs to the zinc-containing alcohol dehydrogenase family. Homodimer. The cofactor is Zn(2+).

The enzyme catalyses scyllo-inosose + NAD(+) = 3-dehydro-scyllo-inosose + NADH + H(+). The protein operates within polyol metabolism; myo-inositol metabolism. Its function is as follows. Catalyzes the NAD(+)-dependent oxidation of scyllo-inosose (2-keto-myo-inositol) to 3-dehydro-scyllo-inosose (diketo-inositol), and thus probably functions in a myo-inositol degradation pathway together with IolG, IolN and IolO. Has no activity on myo-inositol, D-chiro-inositol and 1-keto-D-chiro-inositol. This Thermotoga maritima (strain ATCC 43589 / DSM 3109 / JCM 10099 / NBRC 100826 / MSB8) protein is Scyllo-inosose 3-dehydrogenase.